Reading from the N-terminus, the 398-residue chain is Lymphocyte transmembrane adapter 1 (398 aa).

Residues 1–37 lie on the Extracellular side of the membrane; sequence MDGVTPTLSTIRGRTLESSTLHVTPRSLDRNKDQITN. Residues 38 to 58 form a helical; Signal-anchor for type III membrane protein membrane-spanning segment; the sequence is IFSGFAGLLAILLVVAVFCIL. The Cytoplasmic portion of the chain corresponds to 59-398; sequence WNWNKRKKRQ…GPGTQLLPDE (340 aa). Tyr193 carries the phosphotyrosine modification. The segment at 228-261 is disordered; the sequence is TEERDEGCGDAGDCTSLYSPGAEDSDSLSNGEGS. A phosphotyrosine mark is found at Tyr268 and Tyr294. The interval 298–330 is disordered; it reads PAADPSGSQQQAEKDVPSSNIGHVEDKTDDPGT. The span at 303–318 shows a compositional bias: polar residues; sequence SGSQQQAEKDVPSSNI. Positions 320 to 329 are enriched in basic and acidic residues; sequence HVEDKTDDPG. Phosphotyrosine is present on residues Tyr345 and Tyr373. Residues 347–398 are disordered; sequence DFQPFTQSEDSQMKHREEMSNEDSSDYENVLTAKLGGRDSEQGPGTQLLPDE.

As to quaternary structure, when phosphorylated, interacts with GRB2, PIK3R1 and GRAP2. Phosphorylated on tyrosines by Syk, Lck or ZAP70 upon TCR or BCR activation; which leads to the recruitment of GRB2, PIK3R1 and GRAP2. In terms of tissue distribution, expressed in spleen, thymus, and peripheral blood leukocytes. Expressed in several B-, T-, NK and monocyte cell lines.

The protein localises to the cell membrane. Functionally, negatively regulates TCR (T-cell antigen receptor)-mediated signaling in T-cells and BCR (B-cell antigen receptor)-mediated signaling in B-cells. In Homo sapiens (Human), this protein is Lymphocyte transmembrane adapter 1 (LAX1).